Consider the following 1218-residue polypeptide: Coatomer subunit alpha-2 (1218 aa).

WD repeat units follow at residues T7–D48, E49–T88, G91–T132, G133–V172, G202–V241, G246–T285, R288–S326, and S363–A404. The interval M855–E876 is disordered. Positions F862 to E876 are enriched in acidic residues.

In terms of assembly, oligomeric complex that consists of at least the alpha, beta, beta', gamma, delta, epsilon and zeta subunits.

The protein resides in the cytoplasm. Its subcellular location is the golgi apparatus membrane. The protein localises to the cytoplasmic vesicle. It localises to the COPI-coated vesicle membrane. In terms of biological role, the coatomer is a cytosolic protein complex that binds to dilysine motifs and reversibly associates with Golgi non-clathrin-coated vesicles, which further mediate biosynthetic protein transport from the ER, via the Golgi up to the trans Golgi network. Coatomer complex is required for budding from Golgi membranes, and is essential for the retrograde Golgi-to-ER transport of dilysine-tagged proteins. This Oryza sativa subsp. japonica (Rice) protein is Coatomer subunit alpha-2.